Consider the following 548-residue polypeptide: (S)-beta-macrocarpene synthase (548 aa).

Mg(2+) is bound by residues Asp-302 and Asp-306. Positions 302, 306, 443, and 446 each coordinate substrate. The DDXXD motif signature appears at 302 to 306 (DDTLD). Residues Asn-446, Ser-450, and Glu-454 each contribute to the Mg(2+) site.

Belongs to the terpene synthase family. As to quaternary structure, monomer. Requires Mg(2+) as cofactor. Mn(2+) serves as cofactor. As to expression, expressed in roots. Not detected in leaves, unless damaged by herbivory or infected by fungi.

It localises to the cytoplasm. The enzyme catalyses (S)-beta-bisabolene = (S)-beta-macrocarpene. The catalysed reaction is (2E,6E)-farnesyl diphosphate = (S)-beta-bisabolene + diphosphate. It catalyses the reaction (2E)-geranyl diphosphate = (4S)-limonene + diphosphate. It carries out the reaction (2E)-geranyl diphosphate = beta-myrcene + diphosphate. The enzyme catalyses (2E)-geranyl diphosphate = terpinolene + diphosphate. The catalysed reaction is (2E)-geranyl diphosphate + H2O = (S)-linalool + diphosphate. It functions in the pathway secondary metabolite biosynthesis; terpenoid biosynthesis. In terms of biological role, involved in the biosynthesis of the bicyclic sesquiterpene (S)-beta-macrocarpene. Can use both geranyl diphosphate and farnesyl diphosphate as substrate, but not geranylgeranyl diphosphate. Produces mainly (S)-beta-macrocarpene, but also smaller amounts of beta-bisabolene and (E)-beta-farnesene when used with farnesyl diphosphate as substrate. In the presence of geranyl diphosphate, produces the acyclic monoterpenes beta-myrcene and linalool along with minor amounts of the cyclic compounds limonene, alpha-thujene, sabinene and alpha-terpinolene. May be involved in plant defense. The sequence is that of (S)-beta-macrocarpene synthase from Zea mays (Maize).